A 436-amino-acid chain; its full sequence is Testican-3 (436 aa).

Positions 1–22 (MLKVSALLCVCAAAWCSQTLAA) are cleaved as a signal peptide. Disulfide bonds link Cys-90–Cys-101, Cys-95–Cys-111, Cys-139–Cys-169, Cys-142–Cys-162, Cys-151–Cys-183, Cys-317–Cys-341, Cys-352–Cys-359, and Cys-361–Cys-380. Residues 133 to 185 (GLPSSTCKPCPIAYASPVCGSDGHSYSSQCKLEYQACVLGKQISIKCEGRCPC) form the Kazal-like domain. The Thyroglobulin type-1 domain occupies 314–380 (DPPCHTELSN…GSRINGVADC (67 aa)). O-linked (Xyl...) (glycosaminoglycan) serine glycans are attached at residues Ser-387 and Ser-392. The tract at residues 393-436 (GDFREWTDDEGEEDDIMNDKDDIEDDDEDEGDDDDDGDVHDGYI) is disordered. Positions 399–430 (TDDEGEEDDIMNDKDDIEDDDEDEGDDDDDGD) are enriched in acidic residues.

Contains chondroitin sulfate and heparan sulfate O-linked oligosaccharides. As to expression, expressed in brain.

The protein resides in the secreted. The protein localises to the extracellular space. Its subcellular location is the extracellular matrix. In terms of biological role, may participate in diverse steps of neurogenesis. Inhibits the processing of pro-matrix metalloproteinase 2 (MMP-2) by MT1-MMP and MT3-MMP. May interfere with tumor invasion. The chain is Testican-3 (Spock3) from Mus musculus (Mouse).